A 360-amino-acid polypeptide reads, in one-letter code: Meiotic drive suppressor wtf13 (360 aa).

Composition is skewed to polar residues over residues 1–10 (MKNNYTSLKS) and 58–70 (DSST…TNPN). Disordered stretches follow at residues 1–20 (MKNN…ELKT) and 37–75 (EEEG…ERRQ). Transmembrane regions (helical) follow at residues 90-110 (LLIS…CVNP), 120-140 (AFSV…FCFF), 150-170 (CIKV…ISLA), 186-206 (DLVV…FGCV), 222-242 (SSIS…IWTL), 246-266 (LFGL…TKGL), 276-296 (ATGY…LFFY), and 310-330 (FIGN…RGIA).

It belongs to the WTF family. Homomer. Interacts with other proteins that exhibit high sequence similarity.

The protein resides in the spore membrane. Its subcellular location is the vacuole membrane. In terms of biological role, acts as a suppressor component of the dual wtf meiotic drive system, and can suppress but not confer meiotic drive by compatible poisons. Wtf meiotic drive systems promote unequal transmission of alleles from the parental zygote to progeny spores by encoding a poison and an antidote from the same locus; the poison is trans-acting and forms toxic aggregates in all spores within an ascus, wherease the antidote is spore-specific and targets aggregates for degradation by the vacuole. Meiotic drive by wtf systems therefore lead to poisoning of all progeny that do not inherit the dual poison/antidote allele, or express a compatible antidote. The protein is Meiotic drive suppressor wtf13 of Schizosaccharomyces kambucha (Fission yeast).